We begin with the raw amino-acid sequence, 171 residues long: Replication restart protein PriC (171 aa).

It belongs to the PriC family. In terms of assembly, monomer. Component of the replication restart primosome, which is composed of PriA, PriB, PriC, DnaBe and DnaT; DnaG primase associates transiently with this complex. Interacts with the C-terminus of SSB. SSB interaction is required to load the main replicative helicase onto substrate replication forks. Interacts with helicase DnaB alone and in the DnaB-DnaC complex, probably 1:1 binding with DnaB.

Functionally, involved in the restart of stalled replication forks, which reloads the DnaB replicative helicase on sites other than the origin of replication. In vitro can load (E.coli) DnaB replicative helicase from a DnaB-DnaC complex on a single-stranded DNA (ssDNA)-binding protein (SSB)-coated stalled replication fork with no leading- or lagging-strand in the absence of other primosome proteins (PriA, PriB or DnaT). Binds SSB (tested with E.coli protein) and ssDNA. Complements priC in an E.coli priB-priC double deletion. This Cronobacter sakazakii (strain ATCC BAA-894) (Enterobacter sakazakii) protein is Replication restart protein PriC.